A 154-amino-acid polypeptide reads, in one-letter code: MTHDNKLQVEAIKCGTVIDHIPAQIGFKLLTLFKLTATDQRITIGLNLPSGELGRKDLIKIENTFLTEQQANQLAMYAPKATVNRIDNYEVVRKLTLSLPDHIDGVLTCPNSNCISRSEPVSSSFSVKSRDGDVHLKCRYCEKEFEHQVVLQAD.

Residues Cys109, Cys114, Cys138, and Cys141 each contribute to the Zn(2+) site.

It belongs to the PyrI family. In terms of assembly, contains catalytic and regulatory chains. The cofactor is Zn(2+).

In terms of biological role, involved in allosteric regulation of aspartate carbamoyltransferase. This Serratia proteamaculans (strain 568) protein is Aspartate carbamoyltransferase regulatory chain.